The chain runs to 388 residues: Dual-specificity RNA methyltransferase RlmN (388 aa).

Residue Glu109 is the Proton acceptor of the active site. In terms of domain architecture, Radical SAM core spans 115-354 (EDDRATLCVS…TIVRKTRGDD (240 aa)). Residues Cys122 and Cys359 are joined by a disulfide bond. Positions 129, 133, and 136 each coordinate [4Fe-4S] cluster. Residues 183 to 184 (GE), Ser215, 237 to 239 (SLH), and Asn316 each bind S-adenosyl-L-methionine. The active-site S-methylcysteine intermediate is Cys359.

Belongs to the radical SAM superfamily. RlmN family. The cofactor is [4Fe-4S] cluster.

The protein localises to the cytoplasm. The enzyme catalyses adenosine(2503) in 23S rRNA + 2 reduced [2Fe-2S]-[ferredoxin] + 2 S-adenosyl-L-methionine = 2-methyladenosine(2503) in 23S rRNA + 5'-deoxyadenosine + L-methionine + 2 oxidized [2Fe-2S]-[ferredoxin] + S-adenosyl-L-homocysteine. It carries out the reaction adenosine(37) in tRNA + 2 reduced [2Fe-2S]-[ferredoxin] + 2 S-adenosyl-L-methionine = 2-methyladenosine(37) in tRNA + 5'-deoxyadenosine + L-methionine + 2 oxidized [2Fe-2S]-[ferredoxin] + S-adenosyl-L-homocysteine. In terms of biological role, specifically methylates position 2 of adenine 2503 in 23S rRNA and position 2 of adenine 37 in tRNAs. m2A2503 modification seems to play a crucial role in the proofreading step occurring at the peptidyl transferase center and thus would serve to optimize ribosomal fidelity. The sequence is that of Dual-specificity RNA methyltransferase RlmN from Salmonella arizonae (strain ATCC BAA-731 / CDC346-86 / RSK2980).